A 181-amino-acid polypeptide reads, in one-letter code: Protein Syd (181 aa).

Belongs to the Syd family.

It localises to the cell inner membrane. Interacts with the SecY protein in vivo. May bind preferentially to an uncomplexed state of SecY, thus functioning either as a chelating agent for excess SecY in the cell or as a regulatory factor that negatively controls the translocase function. The chain is Protein Syd from Shigella flexneri serotype 5b (strain 8401).